The chain runs to 122 residues: Modulator protein MzrA (122 aa).

Over 1-10 the chain is Cytoplasmic; the sequence is MKILTRIPRR. Residues 11-31 traverse the membrane as a helical segment; that stretch reads LLPWLLGGALALVAVSFAPAL. Topologically, residues 32-122 are periplasmic; sequence LSHETVVQIR…NQDANRSIYS (91 aa).

Belongs to the MzrA family. As to quaternary structure, interacts with EnvZ.

It is found in the cell inner membrane. Functionally, modulates the activity of the EnvZ/OmpR two-component regulatory system, probably by directly modulating EnvZ enzymatic activity and increasing stability of phosphorylated OmpR. This is Modulator protein MzrA from Pantoea sp. (strain At-9b).